The following is a 449-amino-acid chain: Glutamate--tRNA ligase 2 (449 aa).

Positions 11–21 (PSPTGFLHIGN) match the 'HIGH' region motif. The 'KMSKS' region signature appears at 242–246 (GLSKR). Lys245 contacts ATP.

This sequence belongs to the class-I aminoacyl-tRNA synthetase family. Glutamate--tRNA ligase type 1 subfamily. In terms of assembly, monomer.

Its subcellular location is the cytoplasm. The catalysed reaction is tRNA(Glu) + L-glutamate + ATP = L-glutamyl-tRNA(Glu) + AMP + diphosphate. In terms of biological role, catalyzes the attachment of glutamate to tRNA(Glu) in a two-step reaction: glutamate is first activated by ATP to form Glu-AMP and then transferred to the acceptor end of tRNA(Glu). This chain is Glutamate--tRNA ligase 2, found in Methylorubrum populi (strain ATCC BAA-705 / NCIMB 13946 / BJ001) (Methylobacterium populi).